Here is a 456-residue protein sequence, read N- to C-terminus: Bifunctional protein GlmU (456 aa).

The tract at residues 1–229 is pyrophosphorylase; the sequence is MLNNAMSVVI…LSEVEGVNNR (229 aa). UDP-N-acetyl-alpha-D-glucosamine is bound by residues 11 to 14, K25, Q76, 81 to 82, 103 to 105, G140, E154, N169, and N227; these read LAAG, GT, and YGD. D105 contacts Mg(2+). Residue N227 participates in Mg(2+) binding. The segment at 230-250 is linker; that stretch reads LQLSRLERVYQSEQAEKLLLA. Positions 251-456 are N-acetyltransferase; the sequence is GVMLRDPARF…EGWRRPVKKK (206 aa). UDP-N-acetyl-alpha-D-glucosamine contacts are provided by R333 and K351. H363 acts as the Proton acceptor in catalysis. 2 residues coordinate UDP-N-acetyl-alpha-D-glucosamine: Y366 and N377. Residues A380, 386-387, S405, A423, and R440 each bind acetyl-CoA; that span reads NY.

It in the N-terminal section; belongs to the N-acetylglucosamine-1-phosphate uridyltransferase family. This sequence in the C-terminal section; belongs to the transferase hexapeptide repeat family. In terms of assembly, homotrimer. The cofactor is Mg(2+).

It is found in the cytoplasm. The catalysed reaction is alpha-D-glucosamine 1-phosphate + acetyl-CoA = N-acetyl-alpha-D-glucosamine 1-phosphate + CoA + H(+). It carries out the reaction N-acetyl-alpha-D-glucosamine 1-phosphate + UTP + H(+) = UDP-N-acetyl-alpha-D-glucosamine + diphosphate. The protein operates within nucleotide-sugar biosynthesis; UDP-N-acetyl-alpha-D-glucosamine biosynthesis; N-acetyl-alpha-D-glucosamine 1-phosphate from alpha-D-glucosamine 6-phosphate (route II): step 2/2. It functions in the pathway nucleotide-sugar biosynthesis; UDP-N-acetyl-alpha-D-glucosamine biosynthesis; UDP-N-acetyl-alpha-D-glucosamine from N-acetyl-alpha-D-glucosamine 1-phosphate: step 1/1. It participates in bacterial outer membrane biogenesis; LPS lipid A biosynthesis. Its function is as follows. Catalyzes the last two sequential reactions in the de novo biosynthetic pathway for UDP-N-acetylglucosamine (UDP-GlcNAc). The C-terminal domain catalyzes the transfer of acetyl group from acetyl coenzyme A to glucosamine-1-phosphate (GlcN-1-P) to produce N-acetylglucosamine-1-phosphate (GlcNAc-1-P), which is converted into UDP-GlcNAc by the transfer of uridine 5-monophosphate (from uridine 5-triphosphate), a reaction catalyzed by the N-terminal domain. In Escherichia coli O127:H6 (strain E2348/69 / EPEC), this protein is Bifunctional protein GlmU.